Reading from the N-terminus, the 664-residue chain is ATP synthase subunit alpha 2 (664 aa).

Position 180-187 (180-187 (GDRATGKT)) interacts with ATP. The interval 525–664 (MPAEDAAGDI…DAEAEARHKR (140 aa)) is disordered. Basic and acidic residues predominate over residues 543-588 (ARGDADRDADHGANREVSREVSPEASREVSREVSCEVSHEADRDAA). The span at 589 to 599 (ADAARVAGRAP) shows a compositional bias: low complexity. Residues 621 to 639 (ADGDRASASRPRPDARGDA) show a composition bias toward basic and acidic residues.

This sequence belongs to the ATPase alpha/beta chains family. As to quaternary structure, F-type ATPases have 2 components, CF(1) - the catalytic core - and CF(0) - the membrane proton channel. CF(1) has five subunits: alpha(3), beta(3), gamma(1), delta(1), epsilon(1). CF(0) has three main subunits: a(1), b(2) and c(9-12). The alpha and beta chains form an alternating ring which encloses part of the gamma chain. CF(1) is attached to CF(0) by a central stalk formed by the gamma and epsilon chains, while a peripheral stalk is formed by the delta and b chains.

The protein resides in the cell inner membrane. It catalyses the reaction ATP + H2O + 4 H(+)(in) = ADP + phosphate + 5 H(+)(out). Its function is as follows. Produces ATP from ADP in the presence of a proton gradient across the membrane. The alpha chain is a regulatory subunit. The polypeptide is ATP synthase subunit alpha 2 (Burkholderia pseudomallei (strain 1710b)).